The following is a 447-amino-acid chain: Chitobiosyldiphosphodolichol beta-mannosyltransferase (447 aa).

The Cytoplasmic portion of the chain corresponds to 1 to 2 (MT). The helical; Signal-anchor for type II membrane protein transmembrane segment at 3–23 (LVLLLSIFAICFSSVAFIQLL) threads the bilayer. Topologically, residues 24-447 (PTRREKKSSE…IAGTFLGLVT (424 aa)) are lumenal.

It belongs to the glycosyltransferase group 1 family. Glycosyltransferase 33 subfamily.

The protein localises to the endoplasmic reticulum membrane. It catalyses the reaction an N,N'-diacetylchitobiosyl-diphospho-di-trans,poly-cis-dolichol + GDP-alpha-D-mannose = a beta-D-Man-(1-&gt;4)-beta-D-GlcNAc-(1-&gt;4)-alpha-D-GlcNAc-diphospho-di-trans,poly-cis-dolichol + GDP + H(+). It functions in the pathway protein modification; protein glycosylation. Its function is as follows. Participates in the formation of the lipid-linked precursor oligosaccharide for N-glycosylation. Involved in assembling the dolichol-pyrophosphate-GlcNAc(2)-Man(5) intermediate on the cytoplasmic surface of the ER. The chain is Chitobiosyldiphosphodolichol beta-mannosyltransferase from Arthroderma benhamiae (strain ATCC MYA-4681 / CBS 112371) (Trichophyton mentagrophytes).